A 293-amino-acid polypeptide reads, in one-letter code: SAGA-associated factor 29 (293 aa).

Residues 12–88 (ELLAELQRLL…KALDKIAEIK (77 aa)) adopt a coiled-coil conformation. Residues 152 to 293 (GDYVAKPGDK…VVACKETKKK (142 aa)) form the SGF29 C-terminal domain. Histone H3K4me3 N-terminus binding regions lie at residues 194–196 (DID) and 240–243 (QTTC). Residues 264 to 266 (FED) are histone H3K4me3 binding.

Belongs to the SGF29 family. In terms of assembly, interacts with dimethylated and trimethylated 'Lys-4' of histone H3 (H3K4me2 and H3K4me3), with a preference for the trimethylated form (H3K4me3). Component of some SAGA-type complexes. Component of the ADA2A-containing complex (ATAC).

The protein localises to the nucleus. Functionally, chromatin reader component of some histone acetyltransferase (HAT) SAGA-type complexes like the TFTC-HAT, ATAC or STAGA complexes. SGF29 specifically recognizes and binds methylated 'Lys-4' of histone H3 (H3K4me), with a preference for trimethylated form (H3K4me3). In the SAGA-type complexes, SGF29 is required to recruit complexes to H3K4me. Also binds non-histone proteins that are methylated on Lys residues. This chain is SAGA-associated factor 29, found in Gallus gallus (Chicken).